Here is a 355-residue protein sequence, read N- to C-terminus: 3-dehydroquinate synthase (355 aa).

Residues glutamate 71–lysine 76, glycine 105–aspartate 109, threonine 129–serine 130, lysine 142, and lysine 151 each bind NAD(+). Zn(2+) is bound by residues glutamate 184, histidine 246, and histidine 263.

Belongs to the sugar phosphate cyclases superfamily. Dehydroquinate synthase family. The cofactor is NAD(+). Co(2+) serves as cofactor. It depends on Zn(2+) as a cofactor.

The protein localises to the cytoplasm. The catalysed reaction is 7-phospho-2-dehydro-3-deoxy-D-arabino-heptonate = 3-dehydroquinate + phosphate. It participates in metabolic intermediate biosynthesis; chorismate biosynthesis; chorismate from D-erythrose 4-phosphate and phosphoenolpyruvate: step 2/7. In terms of biological role, catalyzes the conversion of 3-deoxy-D-arabino-heptulosonate 7-phosphate (DAHP) to dehydroquinate (DHQ). This Streptococcus pneumoniae (strain ATCC BAA-255 / R6) protein is 3-dehydroquinate synthase.